The chain runs to 238 residues: Probable transcriptional regulatory protein CF0838 (238 aa).

The protein belongs to the TACO1 family.

The protein localises to the cytoplasm. This is Probable transcriptional regulatory protein CF0838 from Chlamydia felis (strain Fe/C-56) (Chlamydophila felis).